A 96-amino-acid polypeptide reads, in one-letter code: Putative membrane protein insertion efficiency factor (96 aa).

Belongs to the UPF0161 family.

Its subcellular location is the cell inner membrane. Its function is as follows. Could be involved in insertion of integral membrane proteins into the membrane. This chain is Putative membrane protein insertion efficiency factor, found in Borreliella afzelii (strain PKo) (Borrelia afzelii).